Reading from the N-terminus, the 106-residue chain is Large ribosomal subunit protein bL21 (106 aa).

The protein belongs to the bacterial ribosomal protein bL21 family. In terms of assembly, part of the 50S ribosomal subunit. Contacts protein L20.

In terms of biological role, this protein binds to 23S rRNA in the presence of protein L20. In Xanthomonas oryzae pv. oryzae (strain MAFF 311018), this protein is Large ribosomal subunit protein bL21.